A 223-amino-acid chain; its full sequence is Type III pantothenate kinase (223 aa).

D17 to H24 contributes to the ATP binding site. Substrate contacts are provided by residues Y81 and G85–R88. D87 acts as the Proton acceptor in catalysis. D102 is a binding site for K(+). S105 serves as a coordination point for ATP. T157 contacts substrate.

Belongs to the type III pantothenate kinase family. As to quaternary structure, homodimer. NH4(+) is required as a cofactor. It depends on K(+) as a cofactor.

The protein localises to the cytoplasm. The catalysed reaction is (R)-pantothenate + ATP = (R)-4'-phosphopantothenate + ADP + H(+). The protein operates within cofactor biosynthesis; coenzyme A biosynthesis; CoA from (R)-pantothenate: step 1/5. Functionally, catalyzes the phosphorylation of pantothenate (Pan), the first step in CoA biosynthesis. The polypeptide is Type III pantothenate kinase (Helicobacter pylori (strain HPAG1)).